The following is a 1129-amino-acid chain: MPTPVAAARQCLSPAAVPALDAAVASARRRAHAQTTSLHLISSLLAPPAPPLLRDALARARSAAYSPRVQLKALDLCFAVSLDRLPSVSASSSSGAADEPPVSNSLMAAIKRSQANQRRNPDTFHFYHQAATAQTPAAVKVELSHLVLAILDDPVVSRVFAEAGFRSGDIKLAILRPAPPMPLLGRLPTRTRPPPLFLCSFAAADDADVPSPAGNLAGAGEENCRRIAEILSRGRNPMLVGVGAASAADDFAAASPYRIIHVDPNTIDRSDLGVAAAMASATSGLIISIGDLKQLVPDEDAEAQENGRRVVAEVTRVLEAHSKVGRVWVMGWSATYETYLAFLSKFPLVDKDWDLQLLPITAVHAAPAAAGPAAAGGLMPPATTVAAFSKPAASLMDSFVPFGGFLCDNYEENSLTANSCPQALRCQQCNDKYEQEVATIISASGITAEDHHQGGLPSLLQNGSMMGPNNGFDPVKVRDDRMVLNSKILNLQKKWNEYCLRLHQDCQRINRDPYKPFPRYIGVPADKERSANPSKGSESIGVQKDVIKPCAVSAVHSSSTARPISSPSVTNKRNEDLVLNLQARHSKSDENLQERGMQSQHGTLSNADNPDDHASPSSAAPVETDLVLCTPRDCSSKGSSSTCSKRVEDSERSVHLVPKKVDDLNLKHPQLSVQPNSCSWSSINVGKTSHSTLHSVASGGFSAFGQWQKRSPLAAQNSDLSNYKLLVERLFKVVGRQEEAVSAICESIVRCRSTESRRGPSRNDIWLCFHGSDSMAKKRIAVALAELMHGSKENLIYLDLNLQDWDDSSFRGKTGIDCIVEQLSKKRRSVLFLDNIDRADCLVQDSLSDAIKSGRFQDMRGKVVDINDSIVVLSRSMIHGSKNGLEEGLSFSEEKILATRGHRLKILVEPGRAITSGCPSGKVVVSPRHFLTKIQASLCSGSISKRKLSMSDDQEKLQESPSSLKRLHRTSSIPFDLNLPVDEDEPFDADDDSSSHENSYGNTEKSIDALLHSVDGSINFKPFDFDKLADDMLQEFSNILRKNLGAECMLEIDVGAMEQILAAAWKSEDKGPVQTWLEQVFARSLDELKLKYKHVSSSTLRLVPCEDTLPTVKGDGLGVLLPPRIILDC.

A Clp R domain is found at 8–180 (ARQCLSPAAV…KLAILRPAPP (173 aa)). 2 repeat regions span residues 12–85 (LSPA…LDRL) and 102–180 (VSNS…PAPP). The disordered stretch occupies residues 519–573 (RYIGVPADKERSANPSKGSESIGVQKDVIKPCAVSAVHSSSTARPISSPSVTNKR). The segment covering 557–568 (SSSTARPISSPS) has biased composition (low complexity). The EAR 1 signature appears at 577-581 (LVLNL). The interval 587–654 (KSDENLQERG…KRVEDSERSV (68 aa)) is disordered. The span at 596–608 (GMQSQHGTLSNAD) shows a compositional bias: polar residues. Over residues 645–654 (KRVEDSERSV) the composition is skewed to basic and acidic residues. Short sequence motifs (EAR) lie at residues 798-802 (LDLNL) and 975-980 (FDLNLP). Residues 975–1001 (FDLNLPVDEDEPFDADDDSSSHENSYG) are disordered. Residues 981–992 (VDEDEPFDADDD) are compositionally biased toward acidic residues.

This sequence belongs to the ClpA/ClpB family. Polyubiquitinated. Strigolactone, but not karrikin, triggers rapid SCF(D3)-dependent degradation via the proteasome.

Its function is as follows. Repressor of strigolactones (SL) signaling. Subjected to a negative feedback control of SL signaling. This is Protein DWARF 53-LIKE from Oryza sativa subsp. japonica (Rice).